We begin with the raw amino-acid sequence, 436 residues long: UPF0597 protein YhaM (436 aa).

The protein belongs to the UPF0597 family.

The chain is UPF0597 protein YhaM from Escherichia coli (strain 55989 / EAEC).